We begin with the raw amino-acid sequence, 60 residues long: MKSDIRVCANWETTHDRPVYALGDRCPECDGPTENSAPAPFSPEDPYGEYRRRVRRRASE.

The disordered stretch occupies residues C29–E60.

It belongs to the NOP10 family.

In terms of biological role, involved in ribosome biogenesis; more specifically in 18S rRNA pseudouridylation and in cleavage of pre-rRNA. The protein is Ribosome biogenesis protein Nop10 of Halorubrum lacusprofundi (strain ATCC 49239 / DSM 5036 / JCM 8891 / ACAM 34).